Consider the following 314-residue polypeptide: Aspartate carbamoyltransferase catalytic subunit (314 aa).

Carbamoyl phosphate contacts are provided by Arg-64 and Thr-65. Lys-92 contacts L-aspartate. Residues Arg-114, His-142, and Gln-145 each coordinate carbamoyl phosphate. Arg-175 and Arg-230 together coordinate L-aspartate. Carbamoyl phosphate is bound by residues Gly-271 and Pro-272.

This sequence belongs to the aspartate/ornithine carbamoyltransferase superfamily. ATCase family. As to quaternary structure, heterododecamer (2C3:3R2) of six catalytic PyrB chains organized as two trimers (C3), and six regulatory PyrI chains organized as three dimers (R2).

It catalyses the reaction carbamoyl phosphate + L-aspartate = N-carbamoyl-L-aspartate + phosphate + H(+). It functions in the pathway pyrimidine metabolism; UMP biosynthesis via de novo pathway; (S)-dihydroorotate from bicarbonate: step 2/3. Its function is as follows. Catalyzes the condensation of carbamoyl phosphate and aspartate to form carbamoyl aspartate and inorganic phosphate, the committed step in the de novo pyrimidine nucleotide biosynthesis pathway. This is Aspartate carbamoyltransferase catalytic subunit from Deinococcus radiodurans (strain ATCC 13939 / DSM 20539 / JCM 16871 / CCUG 27074 / LMG 4051 / NBRC 15346 / NCIMB 9279 / VKM B-1422 / R1).